The chain runs to 324 residues: Protoheme IX farnesyltransferase 2 (324 aa).

Helical transmembrane passes span 39–59, 63–83, 115–135, 137–157, 166–186, 192–212, 239–259, 260–280, and 302–322; these read LIKP…MLLA, IPSP…AGSA, HALV…WATT, LLSA…YTLV, IVWG…GVTG, ALVM…SLAM, IVVF…ATGW, LYTA…HRLH, and LMIV…VLGW.

It belongs to the UbiA prenyltransferase family. Protoheme IX farnesyltransferase subfamily.

Its subcellular location is the cell membrane. It catalyses the reaction heme b + (2E,6E)-farnesyl diphosphate + H2O = Fe(II)-heme o + diphosphate. It participates in porphyrin-containing compound metabolism; heme O biosynthesis; heme O from protoheme: step 1/1. Functionally, converts heme B (protoheme IX) to heme O by substitution of the vinyl group on carbon 2 of heme B porphyrin ring with a hydroxyethyl farnesyl side group. This Saccharopolyspora erythraea (strain ATCC 11635 / DSM 40517 / JCM 4748 / NBRC 13426 / NCIMB 8594 / NRRL 2338) protein is Protoheme IX farnesyltransferase 2.